We begin with the raw amino-acid sequence, 216 residues long: DNA gyrase subunit B (216 aa).

The region spanning 140 to 216 is the Toprim domain; the sequence is SELFLVEGDS…PDKLRYHKIV (77 aa).

This sequence belongs to the type II topoisomerase GyrB family. As to quaternary structure, heterotetramer, composed of two GyrA and two GyrB chains. In the heterotetramer, GyrA contains the active site tyrosine that forms a transient covalent intermediate with DNA, while GyrB binds cofactors and catalyzes ATP hydrolysis.

The protein localises to the cytoplasm. The catalysed reaction is ATP-dependent breakage, passage and rejoining of double-stranded DNA.. A type II topoisomerase that negatively supercoils closed circular double-stranded (ds) DNA in an ATP-dependent manner to modulate DNA topology and maintain chromosomes in an underwound state. Negative supercoiling favors strand separation, and DNA replication, transcription, recombination and repair, all of which involve strand separation. Also able to catalyze the interconversion of other topological isomers of dsDNA rings, including catenanes and knotted rings. Type II topoisomerases break and join 2 DNA strands simultaneously in an ATP-dependent manner. This chain is DNA gyrase subunit B (gyrB), found in Acinetobacter sp. (strain SEIP 12.81).